A 933-amino-acid polypeptide reads, in one-letter code: 2-oxoglutarate dehydrogenase E1 component (933 aa).

The protein belongs to the alpha-ketoglutarate dehydrogenase family. As to quaternary structure, homodimer. Part of the 2-oxoglutarate dehydrogenase (OGDH) complex composed of E1 (2-oxoglutarate dehydrogenase), E2 (dihydrolipoamide succinyltransferase) and E3 (dihydrolipoamide dehydrogenase); the complex contains multiple copies of the three enzymatic components (E1, E2 and E3). Interacts (via N-terminus) with SucB, the E2 component of OGDH complex. Thiamine diphosphate is required as a cofactor.

The enzyme catalyses N(6)-[(R)-lipoyl]-L-lysyl-[protein] + 2-oxoglutarate + H(+) = N(6)-[(R)-S(8)-succinyldihydrolipoyl]-L-lysyl-[protein] + CO2. E1 component of the 2-oxoglutarate dehydrogenase (OGDH) complex which catalyzes the decarboxylation of 2-oxoglutarate, the first step in the conversion of 2-oxoglutarate to succinyl-CoA and CO(2). The sequence is that of 2-oxoglutarate dehydrogenase E1 component (sucA) from Escherichia coli O157:H7.